Reading from the N-terminus, the 548-residue chain is Chaperonin GroEL (548 aa).

Residues 30 to 33 (TLGP), Lys51, 87 to 91 (DGTTT), Gly415, 479 to 481 (NAA), and Asp495 each bind ATP.

Belongs to the chaperonin (HSP60) family. In terms of assembly, forms a cylinder of 14 subunits composed of two heptameric rings stacked back-to-back. Interacts with the co-chaperonin GroES.

The protein localises to the cytoplasm. It catalyses the reaction ATP + H2O + a folded polypeptide = ADP + phosphate + an unfolded polypeptide.. Together with its co-chaperonin GroES, plays an essential role in assisting protein folding. The GroEL-GroES system forms a nano-cage that allows encapsulation of the non-native substrate proteins and provides a physical environment optimized to promote and accelerate protein folding. This is Chaperonin GroEL from Pseudomonas fluorescens (strain Pf0-1).